Consider the following 833-residue polypeptide: Transcription factor MBP1 (833 aa).

Residues 5-111 (IYSARYSGVD…FTQTDGSASP (107 aa)) form the HTH APSES-type domain. Residues 36-57 (ATHILKAANFAKAKRTRILEKE) constitute a DNA-binding region (H-T-H motif). 2 disordered regions span residues 104–223 (QTDG…QSPT) and 280–329 (QQSS…SPII). S110 is modified (phosphoserine). The span at 115 to 129 (PKHHHASKVDRKKAI) shows a compositional bias: basic residues. Residues 139–149 (ETKRNNKKAEE) are compositionally biased toward basic and acidic residues. Polar residues predominate over residues 201 to 223 (PNSSISTTQLPSIRSTMGPQSPT). Residues 280-307 (QQSSLIQTQQTESMATSVSSSPSLPTSP) show a composition bias toward low complexity. At T325 the chain carries Phosphothreonine. A phosphoserine mark is found at S326 and S330. ANK repeat units follow at residues 394-423 (ELHT…SIRS) and 512-541 (NGDT…LTTI). At S827 the chain carries Phosphoserine.

In terms of assembly, component of the transcription complex MCB-binding factor (MBF) composed of SWI6 and MBP1. Interacts with MSA1.

The protein localises to the nucleus. Binds to MCB elements (Mlu I cell cycle box) found in the promoter of most DNA synthesis genes. Transcriptional activation by MBF has an important role in the transition from G1 to S phase. It may have a dual role in that it behaves as an activator of transcription at the G1-S boundary and as a repressor during other stages of the cell cycle. The polypeptide is Transcription factor MBP1 (MBP1) (Saccharomyces cerevisiae (strain ATCC 204508 / S288c) (Baker's yeast)).